We begin with the raw amino-acid sequence, 92 residues long: Small ribosomal subunit protein uS19 (92 aa).

This sequence belongs to the universal ribosomal protein uS19 family.

Its function is as follows. Protein S19 forms a complex with S13 that binds strongly to the 16S ribosomal RNA. This chain is Small ribosomal subunit protein uS19, found in Paracoccus denitrificans (strain Pd 1222).